The following is a 619-amino-acid chain: UPF0329 protein ECU08_2070 (619 aa).

2 stretches are compositionally biased toward basic and acidic residues: residues 350–359 and 369–385; these read EREKREESKG and GAGE…RKEE. Positions 350-425 are disordered; that stretch reads EREKREESKG…REKKMGEEHH (76 aa). The segment covering 386-396 has biased composition (acidic residues); that stretch reads EGVEVEEEESA.

The protein belongs to the UPF0329 family.

In Encephalitozoon cuniculi (strain GB-M1) (Microsporidian parasite), this protein is UPF0329 protein ECU08_2070.